The primary structure comprises 510 residues: Bifunctional purine biosynthesis protein PurH (510 aa).

One can recognise an MGS-like domain in the interval Met1–Cys142.

The protein belongs to the PurH family.

The enzyme catalyses (6R)-10-formyltetrahydrofolate + 5-amino-1-(5-phospho-beta-D-ribosyl)imidazole-4-carboxamide = 5-formamido-1-(5-phospho-D-ribosyl)imidazole-4-carboxamide + (6S)-5,6,7,8-tetrahydrofolate. It catalyses the reaction IMP + H2O = 5-formamido-1-(5-phospho-D-ribosyl)imidazole-4-carboxamide. Its pathway is purine metabolism; IMP biosynthesis via de novo pathway; 5-formamido-1-(5-phospho-D-ribosyl)imidazole-4-carboxamide from 5-amino-1-(5-phospho-D-ribosyl)imidazole-4-carboxamide (10-formyl THF route): step 1/1. The protein operates within purine metabolism; IMP biosynthesis via de novo pathway; IMP from 5-formamido-1-(5-phospho-D-ribosyl)imidazole-4-carboxamide: step 1/1. This chain is Bifunctional purine biosynthesis protein PurH, found in Campylobacter jejuni subsp. doylei (strain ATCC BAA-1458 / RM4099 / 269.97).